The sequence spans 556 residues: Arginine--tRNA ligase (556 aa).

Residues 132-142 (ANPTGDLHLGH) carry the 'HIGH' region motif.

This sequence belongs to the class-I aminoacyl-tRNA synthetase family. As to quaternary structure, monomer.

Its subcellular location is the cytoplasm. The enzyme catalyses tRNA(Arg) + L-arginine + ATP = L-arginyl-tRNA(Arg) + AMP + diphosphate. The protein is Arginine--tRNA ligase of Shouchella clausii (strain KSM-K16) (Alkalihalobacillus clausii).